The following is a 447-amino-acid chain: Succinate--CoA ligase [ADP-forming] subunit beta, mitochondrial (447 aa).

A mitochondrion-targeting transit peptide spans 1 to 34 (MFKLGRNRALASAFAATSRAPLASRLPSVSQQQR). An ATP-grasp domain is found at 45–287 (ADLLRQYGIG…TTQEDPDEVR (243 aa)). Residues Lys-82, 89–91 (GRG), and Glu-150 contribute to the ATP site. Mg(2+) is bound by residues Asn-242 and Asp-256. Substrate is bound by residues Asn-307 and 364–366 (GIV).

It belongs to the succinate/malate CoA ligase beta subunit family. In terms of assembly, heterodimer of an alpha and a beta subunit. Mg(2+) is required as a cofactor.

Its subcellular location is the mitochondrion. The enzyme catalyses succinate + ATP + CoA = succinyl-CoA + ADP + phosphate. Its pathway is carbohydrate metabolism; tricarboxylic acid cycle; succinate from succinyl-CoA (ligase route): step 1/1. Functionally, succinyl-CoA synthetase functions in the citric acid cycle (TCA), coupling the hydrolysis of succinyl-CoA to the synthesis of ATP and thus represents the only step of substrate-level phosphorylation in the TCA. The beta subunit provides nucleotide specificity of the enzyme and binds the substrate succinate, while the binding sites for coenzyme A and phosphate are found in the alpha subunit. The chain is Succinate--CoA ligase [ADP-forming] subunit beta, mitochondrial from Neurospora crassa (strain ATCC 24698 / 74-OR23-1A / CBS 708.71 / DSM 1257 / FGSC 987).